The chain runs to 270 residues: 5-deoxy-glucuronate isomerase (270 aa).

This sequence belongs to the isomerase IolB family.

The enzyme catalyses 5-deoxy-D-glucuronate = 5-dehydro-2-deoxy-D-gluconate. The protein operates within polyol metabolism; myo-inositol degradation into acetyl-CoA; acetyl-CoA from myo-inositol: step 4/7. Functionally, involved in the isomerization of 5-deoxy-glucuronate (5DG) to 5-dehydro-2-deoxy-D-gluconate (DKG or 2-deoxy-5-keto-D-gluconate). This chain is 5-deoxy-glucuronate isomerase, found in Halalkalibacterium halodurans (strain ATCC BAA-125 / DSM 18197 / FERM 7344 / JCM 9153 / C-125) (Bacillus halodurans).